We begin with the raw amino-acid sequence, 476 residues long: Aspartyl/glutamyl-tRNA(Asn/Gln) amidotransferase subunit B (476 aa).

Belongs to the GatB/GatE family. GatB subfamily. As to quaternary structure, heterotrimer of A, B and C subunits.

The enzyme catalyses L-glutamyl-tRNA(Gln) + L-glutamine + ATP + H2O = L-glutaminyl-tRNA(Gln) + L-glutamate + ADP + phosphate + H(+). The catalysed reaction is L-aspartyl-tRNA(Asn) + L-glutamine + ATP + H2O = L-asparaginyl-tRNA(Asn) + L-glutamate + ADP + phosphate + 2 H(+). In terms of biological role, allows the formation of correctly charged Asn-tRNA(Asn) or Gln-tRNA(Gln) through the transamidation of misacylated Asp-tRNA(Asn) or Glu-tRNA(Gln) in organisms which lack either or both of asparaginyl-tRNA or glutaminyl-tRNA synthetases. The reaction takes place in the presence of glutamine and ATP through an activated phospho-Asp-tRNA(Asn) or phospho-Glu-tRNA(Gln). The protein is Aspartyl/glutamyl-tRNA(Asn/Gln) amidotransferase subunit B of Latilactobacillus sakei subsp. sakei (strain 23K) (Lactobacillus sakei subsp. sakei).